Here is a 642-residue protein sequence, read N- to C-terminus: MDNSNGIHYIELTPNPIRFDAVSQLTNVFFDDSNKQIFAVRSGGATGVVVKGPGSPDDVVISFCMSDRGGAIRSIKFSPDNQILAVQRKENSVEFICFQGDQPLLQDIITHQVKTLIHGFVWVHNREVALISNTGVEVYTVVPEKRQVRSVKSLSIGIKWFAWCCDANVALLCTSEGNSLIPVLVKQKVITKLPKVDLGNPSRDVQESKVTLGQVYGVLAVLILQSNSTTGLMEVEVHLLNGPGLAPRKCHVLRLSLLGRFAINTVDNLIVVHHQASGTSLLFDISLPGEVINEITYHTPITPGRSIKPFGLKLPSLSPDGQILQCELYSTHWVLFQPNIVIDAKLGCMWFLNLCIEPLCQLISDRIRLTEFLLQRSNGKQMLLKVIGQLVDDQYKGTLLPVLETIFSRINKIYASWVQLELQNQTAQPSNVKTTTLKQSTPPIVLIEQLDMVQIFQRIARRPYTESILMLYLQSLNKFNIAAQEELSKMIISELISNRSFDTLRRLVSYSMLLESKSVACFLLSHSNVDTAISQVAIDMLGRIEAHEIIIEVMLGQGKVIDALRLAKNSMGLEKVPARKFLEAAHKTKDDLIFHSVYRFFQMRNLKLYETLSFPKAEQCTEFIQHYNNTFPADNPTRQPVS.

Positions 462–616 (RPYTESILML…KLYETLSFPK (155 aa)) constitute a Mic1 domain.

It belongs to the RMC1 family. In terms of assembly, component of the Mon1-Ccz1 guanyl-nucleotide exchange factor complex made up of Mon1, Ccz1 and Bulli; the interaction of Bulli with the Mon1-Ccz1 heterodimer is mediated via the C-terminal Mic1 domain of Bulli. Mon1 and Ccz1 form a stable complex which displays Rab7 GEF activity with or without Bulli; GEF activity is enhanced by Bulli possibly by improving membrane association of the complex.

Its subcellular location is the late endosome. In terms of biological role, positive regulator of the Rab7 guanyl-nucleotide exchange activity of the Mon1-Ccz1 complex, possibly by enhancing its endosomal membrane association. As part of the Mon1-Ccz1 complex involved in endolysosomal biogenesis possibly by mediating Rab conversion, the replacement of Rab5 with Rab7 during late endosome maturation. This chain is Regulator of MON1-CCZ1 complex, found in Drosophila melanogaster (Fruit fly).